We begin with the raw amino-acid sequence, 162 residues long: NADH-quinone oxidoreductase subunit I (162 aa).

4Fe-4S ferredoxin-type domains follow at residues 53 to 83 (LRRY…IEAE) and 93 to 122 (TRYD…ETRI). C63, C66, C69, C73, C102, C105, C108, and C112 together coordinate [4Fe-4S] cluster.

The protein belongs to the complex I 23 kDa subunit family. NDH-1 is composed of 14 different subunits. Subunits NuoA, H, J, K, L, M, N constitute the membrane sector of the complex. [4Fe-4S] cluster serves as cofactor.

It localises to the cell inner membrane. It catalyses the reaction a quinone + NADH + 5 H(+)(in) = a quinol + NAD(+) + 4 H(+)(out). Functionally, NDH-1 shuttles electrons from NADH, via FMN and iron-sulfur (Fe-S) centers, to quinones in the respiratory chain. The immediate electron acceptor for the enzyme in this species is believed to be ubiquinone. Couples the redox reaction to proton translocation (for every two electrons transferred, four hydrogen ions are translocated across the cytoplasmic membrane), and thus conserves the redox energy in a proton gradient. This Dechloromonas aromatica (strain RCB) protein is NADH-quinone oxidoreductase subunit I.